The primary structure comprises 1032 residues: ATPase MORC2 (1032 aa).

Alanine 2 is subject to N-acetylalanine. Residues asparagine 39, 87–89 (SAK), and 99–105 (QYGNGLK) contribute to the ATP site. A Mg(2+)-binding site is contributed by asparagine 39. Residues 282-362 (SRFKTRAEQE…KEAKQRALKE (81 aa)) are a coiled coil. Lysine 427 contributes to the ATP binding site. Residues 490–544 (AMEIPTTIQCDLCLKWRTLPFQLSSVEKDYPDTWVCSMNPDPEQDRCEASEQKQK) form a CW-type zinc finger. Positions 499, 502, 525, and 536 each coordinate Zn(2+). Disordered regions lie at residues 530–563 (DPEQ…KQKQ) and 577–793 (ALQK…RAQK). Basic and acidic residues-rich tracts occupy residues 532-543 (EQDRCEASEQKQ) and 550-563 (FRKD…KQKQ). Residues 547–584 (LGTFRKDMKTQEEKQKQLTEKIRQQQEKLEALQKTTPI) adopt a coiled-coil conformation. Residue threonine 582 is modified to Phosphothreonine. A phosphoserine mark is found at serine 602 and serine 615. The segment covering 627-638 (SRPPSLPTPRPA) has biased composition (pro residues). Lysine 652 is covalently cross-linked (Glycyl lysine isopeptide (Lys-Gly) (interchain with G-Cter in SUMO2)). Low complexity predominate over residues 690-704 (PLVQQLSPSLLPNSK). Serine 696 bears the Phosphoserine mark. A Glycyl lysine isopeptide (Lys-Gly) (interchain with G-Cter in SUMO2) cross-link involves residue lysine 704. Position 705 is a phosphoserine (serine 705). Over residues 711–720 (SPKVIKTPVV) the composition is skewed to low complexity. A Glycyl lysine isopeptide (Lys-Gly) (interchain with G-Cter in SUMO2) cross-link involves residue lysine 716. Serine 725 and serine 730 each carry phosphoserine. At threonine 733 the chain carries Phosphothreonine. Serine 739 bears the Phosphoserine; by PAK1 mark. A coiled-coil region spans residues 741-761 (AVSDEEEVEEEAERRKERCKR). The residue at position 743 (serine 743) is a Phosphoserine. A compositionally biased stretch (basic and acidic residues) spans 765–774 (VVKEEKKDSN). Lysine 767 participates in a covalent cross-link: Glycyl lysine isopeptide (Lys-Gly) (interchain with G-Cter in SUMO2). Phosphoserine occurs at positions 777 and 779. Residue lysine 819 forms a Glycyl lysine isopeptide (Lys-Gly) (interchain with G-Cter in SUMO2) linkage. Residues 850-870 (RLMKPPSPEHQSLDTQQEGGE) form a disordered region. Lysine 932 is covalently cross-linked (Glycyl lysine isopeptide (Lys-Gly) (interchain with G-Cter in SUMO2)). Positions 966 to 1016 (QSRADSRAKASEESLRTSERKLRETEEKLQKLRTNIVALLQKVQEDIDINT) form a coiled coil.

In terms of assembly, homodimerizes upon ATP-binding and dissociate upon ATP hydrolysis; homodimerization is required for gene silencing. Interacts with HDAC4. Interacts with ACLY. Interacts with TASOR and MPHOSPH8; the interactions associate MORC2 with the HUSH complex which recruits MORC2 to heterochromatic loci. Phosphorylated by PAK1 at Ser-739 upon DNA damage. Phosphorylation is required for ATPase activity and recruitment to damaged chromatin. In terms of tissue distribution, highly expressed in smooth muscle, pancreas and testis.

It is found in the nucleus. The protein resides in the cytoplasm. It localises to the cytosol. The protein localises to the chromosome. Its subcellular location is the nucleus matrix. It carries out the reaction ATP + H2O = ADP + phosphate + H(+). With respect to regulation, ATPase activity is dependent of phosphorylation by PAK1 and presence of DNA. Essential for epigenetic silencing by the HUSH (human silencing hub) complex. Recruited by HUSH to target site in heterochromatin, the ATPase activity and homodimerization are critical for HUSH-mediated silencing. Represses germ cell-related genes and L1 retrotransposons in collaboration with SETDB1 and the HUSH complex, the silencing is dependent of repressive epigenetic modifications, such as H3K9me3 mark. Silencing events often occur within introns of transcriptionally active genes, and lead to the down-regulation of host gene expression. During DNA damage response, regulates chromatin remodeling through ATP hydrolysis. Upon DNA damage, is phosphorylated by PAK1, both colocalize to chromatin and induce H2AX expression. ATPase activity is required and dependent of phosphorylation by PAK1 and presence of DNA. Recruits histone deacetylases, such as HDAC4, to promoter regions, causing local histone H3 deacetylation and transcriptional repression of genes such as CA9. Exhibits a cytosolic function in lipogenesis, adipogenic differentiation, and lipid homeostasis by increasing the activity of ACLY, possibly preventing its dephosphorylation. The polypeptide is ATPase MORC2 (Homo sapiens (Human)).